A 308-amino-acid polypeptide reads, in one-letter code: UDP-N-acetylenolpyruvoylglucosamine reductase (308 aa).

Positions 30-213 (RVGGAAEWFI…KATTQSHLDH (184 aa)) constitute an FAD-binding PCMH-type domain. Arginine 176 is a catalytic residue. Serine 227 acts as the Proton donor in catalysis. Glutamate 297 is an active-site residue.

It belongs to the MurB family. FAD serves as cofactor.

It is found in the cytoplasm. It catalyses the reaction UDP-N-acetyl-alpha-D-muramate + NADP(+) = UDP-N-acetyl-3-O-(1-carboxyvinyl)-alpha-D-glucosamine + NADPH + H(+). Its pathway is cell wall biogenesis; peptidoglycan biosynthesis. Functionally, cell wall formation. The polypeptide is UDP-N-acetylenolpyruvoylglucosamine reductase (Acaryochloris marina (strain MBIC 11017)).